Consider the following 429-residue polypeptide: Adenylosuccinate synthetase (429 aa).

GTP-binding positions include 12 to 18 (GDEGKGK) and 40 to 42 (GHT). The active-site Proton acceptor is aspartate 13. Mg(2+)-binding residues include aspartate 13 and glycine 40. Residues 13–16 (DEGK), 38–41 (NAGH), threonine 129, arginine 143, glutamine 223, threonine 238, and arginine 302 contribute to the IMP site. The Proton donor role is filled by histidine 41. 298 to 304 (VVTGRKR) contacts substrate. GTP contacts are provided by residues arginine 304, 330 to 332 (KLD), and 412 to 414 (STS).

This sequence belongs to the adenylosuccinate synthetase family. Homodimer. Requires Mg(2+) as cofactor.

The protein localises to the cytoplasm. It catalyses the reaction IMP + L-aspartate + GTP = N(6)-(1,2-dicarboxyethyl)-AMP + GDP + phosphate + 2 H(+). Its pathway is purine metabolism; AMP biosynthesis via de novo pathway; AMP from IMP: step 1/2. In terms of biological role, plays an important role in the de novo pathway of purine nucleotide biosynthesis. Catalyzes the first committed step in the biosynthesis of AMP from IMP. In Brucella abortus (strain 2308), this protein is Adenylosuccinate synthetase.